The primary structure comprises 62 residues: Cobrotoxin II (62 aa).

Polar residues predominate over residues 1–16 (LECHNQQSSQTPTTTG). A disordered region spans residues 1-23 (LECHNQQSSQTPTTTGCSGGENN). 4 cysteine pairs are disulfide-bonded: cysteine 3–cysteine 24, cysteine 17–cysteine 41, cysteine 43–cysteine 54, and cysteine 55–cysteine 60.

Belongs to the three-finger toxin family. Short-chain subfamily. Type I alpha-neurotoxin sub-subfamily. Expressed by the venom gland.

It localises to the secreted. Its function is as follows. Binds to muscle nicotinic acetylcholine receptor (nAChR) and inhibit acetylcholine from binding to the receptor, thereby impairing neuromuscular transmission. The chain is Cobrotoxin II from Naja kaouthia (Monocled cobra).